The primary structure comprises 817 residues: Leucine--tRNA ligase (817 aa).

Positions 42–52 (PYPSGRLHMGH) match the 'HIGH' region motif. Residues 576-580 (KMSKS) carry the 'KMSKS' region motif. An ATP-binding site is contributed by K579.

The protein belongs to the class-I aminoacyl-tRNA synthetase family.

Its subcellular location is the cytoplasm. It catalyses the reaction tRNA(Leu) + L-leucine + ATP = L-leucyl-tRNA(Leu) + AMP + diphosphate. In Halorhodospira halophila (strain DSM 244 / SL1) (Ectothiorhodospira halophila (strain DSM 244 / SL1)), this protein is Leucine--tRNA ligase.